The primary structure comprises 283 residues: 4-hydroxy-3-methylbut-2-enyl diphosphate reductase (283 aa).

Cysteine 12 lines the [4Fe-4S] cluster pocket. (2E)-4-hydroxy-3-methylbut-2-enyl diphosphate contacts are provided by histidine 40 and histidine 73. Dimethylallyl diphosphate contacts are provided by histidine 40 and histidine 73. Histidine 40 and histidine 73 together coordinate isopentenyl diphosphate. A [4Fe-4S] cluster-binding site is contributed by cysteine 95. Histidine 123 serves as a coordination point for (2E)-4-hydroxy-3-methylbut-2-enyl diphosphate. A dimethylallyl diphosphate-binding site is contributed by histidine 123. Isopentenyl diphosphate is bound at residue histidine 123. Glutamate 125 serves as the catalytic Proton donor. Threonine 161 contributes to the (2E)-4-hydroxy-3-methylbut-2-enyl diphosphate binding site. Position 189 (cysteine 189) interacts with [4Fe-4S] cluster. 3 residues coordinate (2E)-4-hydroxy-3-methylbut-2-enyl diphosphate: serine 217, asparagine 219, and serine 261. Serine 217, asparagine 219, and serine 261 together coordinate dimethylallyl diphosphate. Positions 217, 219, and 261 each coordinate isopentenyl diphosphate.

Belongs to the IspH family. The cofactor is [4Fe-4S] cluster.

It catalyses the reaction isopentenyl diphosphate + 2 oxidized [2Fe-2S]-[ferredoxin] + H2O = (2E)-4-hydroxy-3-methylbut-2-enyl diphosphate + 2 reduced [2Fe-2S]-[ferredoxin] + 2 H(+). The enzyme catalyses dimethylallyl diphosphate + 2 oxidized [2Fe-2S]-[ferredoxin] + H2O = (2E)-4-hydroxy-3-methylbut-2-enyl diphosphate + 2 reduced [2Fe-2S]-[ferredoxin] + 2 H(+). The protein operates within isoprenoid biosynthesis; dimethylallyl diphosphate biosynthesis; dimethylallyl diphosphate from (2E)-4-hydroxy-3-methylbutenyl diphosphate: step 1/1. It participates in isoprenoid biosynthesis; isopentenyl diphosphate biosynthesis via DXP pathway; isopentenyl diphosphate from 1-deoxy-D-xylulose 5-phosphate: step 6/6. Its function is as follows. Catalyzes the conversion of 1-hydroxy-2-methyl-2-(E)-butenyl 4-diphosphate (HMBPP) into a mixture of isopentenyl diphosphate (IPP) and dimethylallyl diphosphate (DMAPP). Acts in the terminal step of the DOXP/MEP pathway for isoprenoid precursor biosynthesis. This is 4-hydroxy-3-methylbut-2-enyl diphosphate reductase from Citrifermentans bemidjiense (strain ATCC BAA-1014 / DSM 16622 / JCM 12645 / Bem) (Geobacter bemidjiensis).